Here is a 160-residue protein sequence, read N- to C-terminus: UPF0260 protein GDI1595/Gdia_1801 (160 aa).

The protein belongs to the UPF0260 family.

The chain is UPF0260 protein GDI1595/Gdia_1801 from Gluconacetobacter diazotrophicus (strain ATCC 49037 / DSM 5601 / CCUG 37298 / CIP 103539 / LMG 7603 / PAl5).